The sequence spans 154 residues: Fluoride-specific ion channel FluC 1 (154 aa).

The next 4 helical transmembrane spans lie at 28-48, 59-79, 91-111, and 124-144; these read VVAV…AASL, WTTF…MVVI, PFFG…AVDS, and LAYL…AAWA. Residues Gly-99 and Thr-102 each coordinate Na(+).

Belongs to the fluoride channel Fluc/FEX (TC 1.A.43) family.

It localises to the cell membrane. It catalyses the reaction fluoride(in) = fluoride(out). With respect to regulation, na(+) is not transported, but it plays an essential structural role and its presence is essential for fluoride channel function. Functionally, fluoride-specific ion channel. Important for reducing fluoride concentration in the cell, thus reducing its toxicity. The sequence is that of Fluoride-specific ion channel FluC 1 from Streptomyces coelicolor (strain ATCC BAA-471 / A3(2) / M145).